Consider the following 70-residue polypeptide: DNA-directed RNA polymerase subunit epsilon (70 aa).

This sequence belongs to the RNA polymerase subunit epsilon family. As to quaternary structure, RNAP is composed of a core of 2 alpha, a beta and a beta' subunit. The core is associated with a delta subunit, and at least one of epsilon or omega. When a sigma factor is associated with the core the holoenzyme is formed, which can initiate transcription.

It catalyses the reaction RNA(n) + a ribonucleoside 5'-triphosphate = RNA(n+1) + diphosphate. Functionally, a non-essential component of RNA polymerase (RNAP). The protein is DNA-directed RNA polymerase subunit epsilon of Bacillus mycoides (strain KBAB4) (Bacillus weihenstephanensis).